Reading from the N-terminus, the 135-residue chain is Small ribosomal subunit protein bS6 (135 aa).

Residues 99 to 120 (QHSSLGRSTAPANPMASNTPRT) are compositionally biased toward polar residues. The segment at 99 to 135 (QHSSLGRSTAPANPMASNTPRTEGQEQAKTEPQTAPA) is disordered.

This sequence belongs to the bacterial ribosomal protein bS6 family.

Binds together with bS18 to 16S ribosomal RNA. In Synechococcus sp. (strain RCC307), this protein is Small ribosomal subunit protein bS6.